The sequence spans 211 residues: Peptidyl-prolyl cis-trans isomerase-like 3 (211 aa).

The 204-residue stretch at 1 to 204 (MSVTLHTTHG…ETLRINRVTI (204 aa)) folds into the PPIase cyclophilin-type domain.

The protein belongs to the cyclophilin-type PPIase family. PPIL3 subfamily.

It catalyses the reaction [protein]-peptidylproline (omega=180) = [protein]-peptidylproline (omega=0). In terms of biological role, PPIases accelerate the folding of proteins. It catalyzes the cis-trans isomerization of proline imidic peptide bonds in oligopeptides. In Emericella nidulans (strain FGSC A4 / ATCC 38163 / CBS 112.46 / NRRL 194 / M139) (Aspergillus nidulans), this protein is Peptidyl-prolyl cis-trans isomerase-like 3 (cyp10).